Here is a 267-residue protein sequence, read N- to C-terminus: MEMO1 family protein MA_0601 (267 aa).

This sequence belongs to the MEMO1 family.

This is MEMO1 family protein MA_0601 from Methanosarcina acetivorans (strain ATCC 35395 / DSM 2834 / JCM 12185 / C2A).